The primary structure comprises 397 residues: Elongation factor Tu (397 aa).

In terms of domain architecture, tr-type G spans lysine 10–glutamate 206. Positions glycine 19–threonine 26 are G1. Glycine 19–threonine 26 is a binding site for GTP. Threonine 26 serves as a coordination point for Mg(2+). The segment at glycine 60–asparagine 64 is G2. Residues aspartate 81–glycine 84 are G3. Residues aspartate 81–histidine 85 and asparagine 136–aspartate 139 each bind GTP. Residues asparagine 136–aspartate 139 form a G4 region. The segment at serine 174–leucine 176 is G5.

Belongs to the TRAFAC class translation factor GTPase superfamily. Classic translation factor GTPase family. EF-Tu/EF-1A subfamily. As to quaternary structure, monomer.

The protein resides in the cytoplasm. It carries out the reaction GTP + H2O = GDP + phosphate + H(+). In terms of biological role, GTP hydrolase that promotes the GTP-dependent binding of aminoacyl-tRNA to the A-site of ribosomes during protein biosynthesis. This Clostridium kluyveri (strain ATCC 8527 / DSM 555 / NBRC 12016 / NCIMB 10680 / K1) protein is Elongation factor Tu.